Consider the following 470-residue polypeptide: Argininosuccinate lyase (470 aa).

It belongs to the lyase 1 family. Argininosuccinate lyase subfamily.

It is found in the cytoplasm. The catalysed reaction is 2-(N(omega)-L-arginino)succinate = fumarate + L-arginine. It functions in the pathway amino-acid biosynthesis; L-arginine biosynthesis; L-arginine from L-ornithine and carbamoyl phosphate: step 3/3. This is Argininosuccinate lyase from Bordetella avium (strain 197N).